The sequence spans 467 residues: Spermatogenesis- and oogenesis-specific basic helix-loop-helix-containing protein 2 (467 aa).

The region spanning 200-251 (QASFLHSTKEKLRRERIKSCCEQLRTLLPYVKGRKSDVASVIEATVDYVKQV) is the bHLH domain. Low complexity predominate over residues 443 to 453 (ASASDHQASQP). The interval 443-467 (ASASDHQASQPPALPSPQPHDSSYF) is disordered.

Forms both hetero- and homodimers with SOHLH1. Preferentially expressed in the adult ovary and testis. Expressed in the majority of spermatogonia in adult animals, but not in the most undifferentiated spermatogonial population.

The protein resides in the nucleus. The protein localises to the cytoplasm. Functionally, transcription regulator of both male and female germline differentiation. Suppresses genes involved in spermatogonial stem cells maintenance, and induces genes important for spermatogonial differentiation. Coordinates oocyte differentiation without affecting meiosis I. The chain is Spermatogenesis- and oogenesis-specific basic helix-loop-helix-containing protein 2 (Sohlh2) from Mus musculus (Mouse).